We begin with the raw amino-acid sequence, 331 residues long: CMRF35-like molecule 9 (331 aa).

A signal peptide spans 1-18 (MRPLVLLWGCLVLPGYEA). The Ig-like V-type domain maps to 19-120 (LKGPKEISGF…LGRDESFEVT (102 aa)). Residues 19–204 (LKGPKEISGF…KPSVSIPMVR (186 aa)) are Extracellular-facing. An intrachain disulfide couples Cys-37 to Cys-106. Thr-136 carries an O-linked (GalNAc...) threonine glycan. Ser-140 carries O-linked (GalNAc...) serine glycosylation. Thr-143 carries an O-linked (GalNAc...) threonine glycan. O-linked (GalNAc...) serine glycosylation is present at Ser-145. Thr-150 and Thr-152 each carry an O-linked (GalNAc...) threonine glycan. Ser-154 carries an O-linked (GalNAc...) serine glycan. O-linked (GalNAc...) threonine glycans are attached at residues Thr-164, Thr-181, and Thr-182. An O-linked (GalNAc...) serine glycan is attached at Ser-186. A helical transmembrane segment spans residues 205 to 225 (MMAPVLILLSLLLAAGLIAFG). Residues 226–331 (SHMLRWRKKA…ELAFSEFISV (106 aa)) lie on the Cytoplasmic side of the membrane. Positions 278-293 (NPSAVPSPETQNLSQS) are enriched in polar residues. The segment at 278 to 318 (NPSAVPSPETQNLSQSTEEEEAARSLDDDKEDVMAPPPLQM) is disordered.

This sequence belongs to the CD300 family. O-glycosylated with sialylated oligosaccharides. In terms of tissue distribution, expressed in monocyte cell lines. Expressed in certain types of endothelial and myeloid lineage cells. Expressed in mesenteric lymph nodes (LNs), spleen, thymus, lung, heart and kidney. Expressed in high endothelial venules (HEVs) in peripheral and mesenteric LNs (at protein level). Highly expressed in heart. Slightly expressed in spleen and thymus. Isoform 5 is expressed preferentially in heart. Isoform 1 is expressed predominantly in kidney and liver.

It is found in the apical cell membrane. Its subcellular location is the basolateral cell membrane. The protein resides in the endosome. It localises to the multivesicular body membrane. Its function is as follows. Receptor which may mediate L-selectin-dependent lymphocyte rollings. Binds SELL in a calcium dependent manner. Binds lymphocyte. In Mus musculus (Mouse), this protein is CMRF35-like molecule 9 (Cd300lg).